Consider the following 54-residue polypeptide: Large ribosomal subunit protein bL33B (54 aa).

Belongs to the bacterial ribosomal protein bL33 family.

This is Large ribosomal subunit protein bL33B from Saccharopolyspora erythraea (strain ATCC 11635 / DSM 40517 / JCM 4748 / NBRC 13426 / NCIMB 8594 / NRRL 2338).